The primary structure comprises 1941 residues: Myosin light chain kinase, smooth muscle (1941 aa).

2 consecutive Ig-like C2-type domains span residues 33 to 122 (PAFI…VELT) and 156 to 244 (PKFA…AELS). A disulfide bridge links C177 with C228. Y226 is modified (phosphotyrosine; by ABL1). The interval 255–329 (AVRGTKAPSP…RKVPQSSILQ (75 aa)) is disordered. Residues 286–305 (NCPSPQRSGSSARATNSHLK) show a composition bias toward polar residues. Phosphoserine is present on S295. The segment covering 306-320 (SPQEPKPKLCEDAPR) has biased composition (basic and acidic residues). A phosphoserine mark is found at S333 and S355. 4 consecutive Ig-like C2-type domains span residues 402 to 485 (PRFE…GQVS), 502 to 587 (PSFS…ATVT), 611 to 699 (PIFL…AVLT), and 709 to 809 (PWFI…APPR). 2 disulfides stabilise this stretch: C423–C475 and C523–C571. Residue Y452 is modified to Phosphotyrosine; by ABL1 and SRC. A disulfide bond links C730 and C793. Y780 carries the phosphotyrosine; by ABL1 modification. 4 repeat units span residues 856–883 (DVRG…VGQL), 884–911 (DFRD…AEQM), 912–939 (DFRA…PQQV), and 940–966 (DFRS…AATP). The segment at 856 to 985 (DVRGLLKRRV…KKSPSENGGN (130 aa)) is 5 X 28 AA approximate tandem repeats. Residues 911–951 (MDFRANLQRQVKPKTISEEERKVHSPQQVDFRSVLAKKGTP) are actin-binding (calcium/calmodulin-sensitive). The tract at residues 920–1120 (QVKPKTISEE…KRPESQGSAP (201 aa)) is disordered. S935 carries the phosphoserine modification. Residues 936–951 (PQQVDFRSVLAKKGTP) form a calmodulin-binding region. One copy of the 1-5; truncated repeat lies at 967–985 (DFRSVLGGKKKSPSENGGN). 5 tandem repeats follow at residues 990–1002 (LNVK…TPAG), 1003–1014 (DAQAIGALKPVG), 1015–1026 (NAKPAETPKPIG), 1027–1038 (NAKPTETLKPVG), and 1039–1049 (NTKPAETLKPI). The 5 X 12 AA approximate tandem repeats stretch occupies residues 990–1049 (LNVKAGESPTPAGDAQAIGALKPVGNAKPAETPKPIGNAKPTETLKPVGNTKPAETLKPI). An actin-binding (calcium/calmodulin-insensitive) region spans residues 1048-1482 (PIANAQPSGS…TVTVNTEQKV (435 aa)). Over residues 1052-1065 (AQPSGSLKPVTNAQ) the composition is skewed to polar residues. Basic and acidic residues predominate over residues 1085 to 1099 (AGKEEVKEVKNDVNC). One can recognise an Ig-like C2-type 7 domain in the interval 1120–1208 (PVFKEKLQDV…GQAECSCQVT (89 aa)). C1141 and C1192 are disulfide-bonded. The tract at residues 1212–1257 (AQTSENTKAPEMKSRRPKSSLPPVLGTESDATVKKKPAPKTPTKAA) is disordered. In terms of domain architecture, Ig-like C2-type 8 spans 1260-1348 (PQIIQFPEDQ…GSRQAQVNLT (89 aa)). The Fibronectin type-III domain maps to 1356-1449 (PAGTPCASDI…ESELTAVGEK (94 aa)). The interval 1435-1469 (SEPSQESELTAVGEKPEEPKDEVEVSDDDEKEPEV) is disordered. Residues 1453-1467 (PKDEVEVSDDDEKEP) are compositionally biased toward acidic residues. Residue S1460 is modified to Phosphoserine. Phosphotyrosine; by ABL1 is present on Y1471. The Protein kinase domain occupies 1486-1741 (YDIEERLGSG…CTQCLQHPWL (256 aa)). ATP contacts are provided by residues 1492–1500 (LGSGKFGQV) and K1515. Phosphotyrosine; by ABL1 is present on Y1597. Residue D1607 is the Proton acceptor of the active site. Position 1657 is a phosphotyrosine; by ABL1 (Y1657). Positions 1733 to 1796 (TQCLQHPWLM…SGLSGRKSST (64 aa)) are calmodulin-binding. Phosphoserine occurs at positions 1781, 1782, 1794, 1795, and 1798. Positions 1789–1809 (LSGRKSSTGSPTSPINAEKLE) are disordered. Polar residues predominate over residues 1792–1803 (RKSSTGSPTSPI). A Phosphothreonine modification is found at T1800. S1801 is modified (phosphoserine). An Ig-like C2-type 9 domain is found at 1831 to 1920 (PYFSKTIRDL…GEATCTAELI (90 aa)). Cysteines 1852 and 1904 form a disulfide.

The protein belongs to the protein kinase superfamily. CAMK Ser/Thr protein kinase family. In terms of assembly, all isoforms including Telokin bind calmodulin. Interacts with CTTN; this interaction is reduced during thrombin-induced endothelial cell (EC) contraction but is promoted by the barrier-protective agonist sphingosine 1-phosphate (S1P) within lamellipodia. A complex made of ABL1, CTTN and MYLK regulates cortical actin-based cytoskeletal rearrangement critical to sphingosine 1-phosphate (S1P)-mediated endothelial cell (EC) barrier enhancement. Binds to NAA10/ARD1. Interacts with SVIL and PTK2B/PYK2. Requires Mg(2+) as cofactor. It depends on Ca(2+) as a cofactor. Post-translationally, can probably be down-regulated by phosphorylation. Tyrosine phosphorylation by ABL1 increases kinase activity, reverses MLCK-mediated inhibition of Arp2/3-mediated actin polymerization, and enhances CTTN-binding. Phosphorylation by SRC at Tyr-452 promotes CTTN binding. In terms of processing, the C-terminus is deglutamylated by AGTPBP1/CCP1, AGBL1/CCP4 and AGBL4/CCP6, leading to the formation of Myosin light chain kinase, smooth muscle, deglutamylated form. The consequences of C-terminal deglutamylation are unknown. As to expression, smooth muscle isoform is expressed in all tissues with highest levels in bladder, uterus, vas deferens, colon, ileum, and tracheae. Isoform 1 is expressed in lung, bladder, and vas deferens. Telokin is expressed in smooth muscle cells of the gut, reproductive tract and urinary tract, including in uterus, vas deferens, bladder, colon, kidney, ureter and ovary. Telokin is also detected in the trachea.

It localises to the cytoplasm. It is found in the cell projection. The protein resides in the lamellipodium. The protein localises to the cleavage furrow. Its subcellular location is the cytoskeleton. It localises to the stress fiber. The enzyme catalyses L-seryl-[myosin light chain] + ATP = O-phospho-L-seryl-[myosin light chain] + ADP + H(+). The catalysed reaction is L-threonyl-[myosin light chain] + ATP = O-phospho-L-threonyl-[myosin light chain] + ADP + H(+). Its function is as follows. Calcium/calmodulin-dependent myosin light chain kinase implicated in smooth muscle contraction via phosphorylation of myosin light chains (MLC). Also regulates actin-myosin interaction through a non-kinase activity. Phosphorylates PTK2B/PYK2 and myosin light-chains. Involved in the inflammatory response (e.g. apoptosis, vascular permeability, leukocyte diapedesis), cell motility and morphology, airway hyperreactivity and other activities relevant to asthma. Required for tonic airway smooth muscle contraction that is necessary for physiological and asthmatic airway resistance. Necessary for gastrointestinal motility. Implicated in the regulation of endothelial as well as vascular permeability, probably via the regulation of cytoskeletal rearrangements. In the nervous system it has been shown to control the growth initiation of astrocytic processes in culture and to participate in transmitter release at synapses formed between cultured sympathetic ganglion cells. Critical participant in signaling sequences that result in fibroblast apoptosis. Plays a role in the regulation of epithelial cell survival. Required for epithelial wound healing, especially during actomyosin ring contraction during purse-string wound closure. Mediates RhoA-dependent membrane blebbing. Triggers TRPC5 channel activity in a calcium-dependent signaling, by inducing its subcellular localization at the plasma membrane. Promotes cell migration (including tumor cells) and tumor metastasis. PTK2B/PYK2 activation by phosphorylation mediates ITGB2 activation and is thus essential to trigger neutrophil transmigration during acute lung injury (ALI). May regulate optic nerve head astrocyte migration. Probably involved in mitotic cytoskeletal regulation. Regulates tight junction probably by modulating ZO-1 exchange in the perijunctional actomyosin ring. Mediates burn-induced microvascular barrier injury; triggers endothelial contraction in the development of microvascular hyperpermeability by phosphorylating MLC. Essential for intestinal barrier dysfunction. Mediates Giardia spp.-mediated reduced epithelial barrier function during giardiasis intestinal infection via reorganization of cytoskeletal F-actin and tight junctional ZO-1. Necessary for hypotonicity-induced Ca(2+) entry and subsequent activation of volume-sensitive organic osmolyte/anion channels (VSOAC) in cervical cancer cells. This Mus musculus (Mouse) protein is Myosin light chain kinase, smooth muscle.